The following is a 152-amino-acid chain: Transcriptional regulator MraZ (152 aa).

SpoVT-AbrB domains lie at 5 to 52 and 81 to 124; these read ATLV…PLPE and ASEC…DEQT.

This sequence belongs to the MraZ family. Forms oligomers.

The protein localises to the cytoplasm. Its subcellular location is the nucleoid. Negatively regulates its own expression and that of the subsequent genes in the proximal part of the division and cell wall (dcw) gene cluster. Acts by binding directly to DNA. May also regulate the expression of genes outside the dcw cluster. The sequence is that of Transcriptional regulator MraZ from Erwinia tasmaniensis (strain DSM 17950 / CFBP 7177 / CIP 109463 / NCPPB 4357 / Et1/99).